We begin with the raw amino-acid sequence, 344 residues long: tRNA N6-adenosine threonylcarbamoyltransferase (344 aa).

The Fe cation site is built by His-111 and His-115. Substrate is bound by residues 133-137 (LVSGG), Asp-166, Gly-179, and Asn-283. Asp-311 lines the Fe cation pocket.

It belongs to the KAE1 / TsaD family. Fe(2+) is required as a cofactor.

The protein localises to the cytoplasm. It carries out the reaction L-threonylcarbamoyladenylate + adenosine(37) in tRNA = N(6)-L-threonylcarbamoyladenosine(37) in tRNA + AMP + H(+). Required for the formation of a threonylcarbamoyl group on adenosine at position 37 (t(6)A37) in tRNAs that read codons beginning with adenine. Is involved in the transfer of the threonylcarbamoyl moiety of threonylcarbamoyl-AMP (TC-AMP) to the N6 group of A37, together with TsaE and TsaB. TsaD likely plays a direct catalytic role in this reaction. The sequence is that of tRNA N6-adenosine threonylcarbamoyltransferase from Orientia tsutsugamushi (strain Boryong) (Rickettsia tsutsugamushi).